The primary structure comprises 145 residues: D-aminoacyl-tRNA deacylase (145 aa).

Residues 137–138 (GP) carry the Gly-cisPro motif, important for rejection of L-amino acids motif.

This sequence belongs to the DTD family. As to quaternary structure, homodimer.

Its subcellular location is the cytoplasm. The enzyme catalyses glycyl-tRNA(Ala) + H2O = tRNA(Ala) + glycine + H(+). It catalyses the reaction a D-aminoacyl-tRNA + H2O = a tRNA + a D-alpha-amino acid + H(+). Its function is as follows. An aminoacyl-tRNA editing enzyme that deacylates mischarged D-aminoacyl-tRNAs. Also deacylates mischarged glycyl-tRNA(Ala), protecting cells against glycine mischarging by AlaRS. Acts via tRNA-based rather than protein-based catalysis; rejects L-amino acids rather than detecting D-amino acids in the active site. By recycling D-aminoacyl-tRNA to D-amino acids and free tRNA molecules, this enzyme counteracts the toxicity associated with the formation of D-aminoacyl-tRNA entities in vivo and helps enforce protein L-homochirality. The sequence is that of D-aminoacyl-tRNA deacylase from Photobacterium profundum (strain SS9).